We begin with the raw amino-acid sequence, 616 residues long: MALLQISEPGLSAAPHQRRLAVGIDLGTTHSLVATVRSGEAQTLTDSDGRDLLPSVVHYRHDGHSVGWHARDNAVHDLENTVSSVKRLMGRSLADIQQRYPHLPYRFHASDNGLPLIQTSAGNLNPVQVSADILSALAARAESALGGVPDGVVITVPAYFDDAQRQGTKDAARLAGLHVLRLLNEPTAAAIAYGLDSGKEGVIAIYDLGGGTFDISVLRLSRGVFEVLATGGDSALGGDDFDHLLAEWLREQAGVHDRDDRQLDHAFRDAAVKAKIALSSADAIDVDVAGWQGTITREQLDALIAPLVKRTLLSCRRTLKDAGLTAQDVQEVVMVGGSTRVPLVREQVGTFFGRTPLTSIDPDKVVAIGAAIQADILVGNKPDSEMLLLDVIPLSLGLETMGGLVEKIIPRNTTIPVARAQEFTTFKDGQSGMMIHLLQGEREMVTDCRSLARFSLRGLPSLPAGGAHIRVTFQVDADGLLSVTAMEKSTGVEASIQVKPSYGLSDTEIATMITDSMLNAKEDVGARRLAEQKVESARVLESLQSALVADAALLSNDEKGIIVAASEHLHTMMQGSDPVAIEAAIKTVDQQTQEFAARRMDASIRRALAGHSVDEV.

It belongs to the heat shock protein 70 family.

In terms of biological role, chaperone involved in the maturation of iron-sulfur cluster-containing proteins. Has a low intrinsic ATPase activity which is markedly stimulated by HscB. Involved in the maturation of IscU. This is Chaperone protein HscA from Pectobacterium atrosepticum (strain SCRI 1043 / ATCC BAA-672) (Erwinia carotovora subsp. atroseptica).